We begin with the raw amino-acid sequence, 112 residues long: Putative pterin-4-alpha-carbinolamine dehydratase (112 aa).

The protein belongs to the pterin-4-alpha-carbinolamine dehydratase family.

It catalyses the reaction (4aS,6R)-4a-hydroxy-L-erythro-5,6,7,8-tetrahydrobiopterin = (6R)-L-erythro-6,7-dihydrobiopterin + H2O. This chain is Putative pterin-4-alpha-carbinolamine dehydratase, found in Shewanella sp. (strain MR-4).